A 158-amino-acid polypeptide reads, in one-letter code: Transcriptional repressor NrdR (158 aa).

A disordered region spans residues 1-22; it reads MRCPYCGSEDTQVKDSRPAEDN. A zinc finger lies at 3 to 34; it reads CPYCGSEDTQVKDSRPAEDNTSIRRRRICPDC. Basic and acidic residues predominate over residues 11–22; sequence TQVKDSRPAEDN. The region spanning 49 to 139 is the ATP-cone domain; it reads LMVIKKTGRK…VYRDFSLAED (91 aa).

The protein belongs to the NrdR family. Zn(2+) is required as a cofactor.

In terms of biological role, negatively regulates transcription of bacterial ribonucleotide reductase nrd genes and operons by binding to NrdR-boxes. This Rhizobium etli (strain CIAT 652) protein is Transcriptional repressor NrdR.